The primary structure comprises 260 residues: Thiazole synthase (260 aa).

Lys96 acts as the Schiff-base intermediate with DXP in catalysis. 1-deoxy-D-xylulose 5-phosphate is bound by residues Gly157, 184-185 (AG), and 206-207 (NT).

Belongs to the ThiG family. In terms of assembly, homotetramer. Forms heterodimers with either ThiH or ThiS.

It localises to the cytoplasm. The catalysed reaction is [ThiS sulfur-carrier protein]-C-terminal-Gly-aminoethanethioate + 2-iminoacetate + 1-deoxy-D-xylulose 5-phosphate = [ThiS sulfur-carrier protein]-C-terminal Gly-Gly + 2-[(2R,5Z)-2-carboxy-4-methylthiazol-5(2H)-ylidene]ethyl phosphate + 2 H2O + H(+). The protein operates within cofactor biosynthesis; thiamine diphosphate biosynthesis. In terms of biological role, catalyzes the rearrangement of 1-deoxy-D-xylulose 5-phosphate (DXP) to produce the thiazole phosphate moiety of thiamine. Sulfur is provided by the thiocarboxylate moiety of the carrier protein ThiS. In vitro, sulfur can be provided by H(2)S. The chain is Thiazole synthase from Rhodopseudomonas palustris (strain ATCC BAA-98 / CGA009).